Reading from the N-terminus, the 143-residue chain is MGDRRQARELALQALYYFDVDKGSPDELLALFCSNFEDRIDESIRPFFLDLVKGVTQARAEVDDLMNRSSSNWKVSRMPIVDRNIMRMAIFEMLKQPDIPPTVSINEAVEIGKRFGTRGSGAFINGVLDKIRVLKNIDRGEKE.

Belongs to the NusB family.

Functionally, involved in transcription antitermination. Required for transcription of ribosomal RNA (rRNA) genes. Binds specifically to the boxA antiterminator sequence of the ribosomal RNA (rrn) operons. The sequence is that of Transcription antitermination protein NusB from Desulforapulum autotrophicum (strain ATCC 43914 / DSM 3382 / VKM B-1955 / HRM2) (Desulfobacterium autotrophicum).